The following is a 776-amino-acid chain: Ribosomal biogenesis protein LAS1L (776 aa).

Over residues 185-227 (DEDQLDAEDPEEEEREIIADDVLEEIPEPQDDDKDEELAVEDD) the composition is skewed to acidic residues. The interval 185–247 (DEDQLDAEDP…SHPEPSSRHK (63 aa)) is disordered. The span at 228 to 247 (ANTKGNEEVASHPEPSSRHK) shows a compositional bias: basic and acidic residues. A phosphoserine mark is found at S425 and S509. The interval 501–646 (KAIEGSSSSS…DYDDDEEEDR (146 aa)) is disordered. Residues 544–557 (GNLKDVKQEEKKEN) show a composition bias toward basic and acidic residues. Acidic residues-rich tracts occupy residues 558-602 (EEEE…EEEE) and 611-646 (MEADVEESDDVEEEEEVDDEEEDEDDDYDDDEEEDR). S658 carries the phosphoserine modification. Residues 677 to 696 (SAWQVSSEDVRWGTFPLGRL) are interaction with NOL9. Residues 733 to 759 (SSTLSLCCGGSNTNSSSSSSSGNMEGL) are disordered. Over residues 741–755 (GGSNTNSSSSSSSGN) the composition is skewed to low complexity.

Belongs to the LAS1 family. As to quaternary structure, component of some MLL1/MLL complex, at least composed of the core components KMT2A/MLL1, ASH2L, HCFC1/HCF1, WDR5 and RBBP5, as well as the facultative components BACC1, CHD8, E2F6, HSP70, INO80C, KANSL1, LAS1L, MAX, MCRS1, MGA, MYST1/MOF, PELP1, PHF20, PRP31, RING2, RUVB1/TIP49A, RUVB2/TIP49B, SENP3, TAF1, TAF4, TAF6, TAF7, TAF9 and TEX10. Component of the 5FMC complex, at least composed of PELP1, LAS1L, TEX10, WDR18 and SENP3; the complex interacts with methylated CHTOP and ZNF148. Interacts with NOL9 to form an ITS2 pre-rRNA endonuclease-kinase complex.

The protein localises to the nucleus. It is found in the nucleolus. Its subcellular location is the nucleoplasm. The protein resides in the cytoplasm. Its function is as follows. Required for the synthesis of the 60S ribosomal subunit and maturation of the 28S rRNA. Functions as a component of the Five Friends of Methylated CHTOP (5FMC) complex; the 5FMC complex is recruited to ZNF148 by methylated CHTOP, leading to desumoylation of ZNF148 and subsequent transactivation of ZNF148 target genes. Required for the efficient pre-rRNA processing at both ends of internal transcribed spacer 2 (ITS2). This is Ribosomal biogenesis protein LAS1L (Las1l) from Mus musculus (Mouse).